We begin with the raw amino-acid sequence, 119 residues long: Large ribosomal subunit protein bL19 (119 aa).

It belongs to the bacterial ribosomal protein bL19 family.

Functionally, this protein is located at the 30S-50S ribosomal subunit interface and may play a role in the structure and function of the aminoacyl-tRNA binding site. This chain is Large ribosomal subunit protein bL19, found in Limosilactobacillus reuteri (strain DSM 20016) (Lactobacillus reuteri).